The sequence spans 751 residues: Fusarisetin A cluster transcription factor fsa6 (751 aa).

A disordered region spans residues 1-35; the sequence is MADQAQDVRPTEWGPGKTPQGRARLPSSRPREKPQ. The zn(2)-C6 fungal-type DNA-binding region spans 38-66; the sequence is CNLCRRRKLRCDRQRPCSSCAQRELGLSC. Positions 107 to 116 are enriched in polar residues; it reads NVNAQDQVGA. Residues 107–153 are disordered; it reads NVNAQDQVGATPSPRGQPRGPDYPTPAAVHAPSTNEEPVSAAVSPAD.

Its subcellular location is the nucleus. Its function is as follows. Transcription factor that regulates the expression of the gene cluster that mediates the biosynthesis of fusarisetin A. The polypeptide is Fusarisetin A cluster transcription factor fsa6 (Fusarium sp. (strain FN080326)).